Consider the following 187-residue polypeptide: Protein TIFY 3B (187 aa).

Over residues 1–10 the composition is skewed to basic and acidic residues; sequence MTKVKDEPRA. A disordered region spans residues 1-50; sequence MTKVKDEPRASVEGGCGVADGDGGAAEIGGTGSVEKSINEVRSTEIQTAE. The segment covering 14–32 has biased composition (gly residues); the sequence is GGCGVADGDGGAAEIGGTG. Residues 51 to 86 form the Tify domain; it reads PTVPPNQLTIFFGGSVTVFDGLPSEKVQEILRIAAK. A Jas motif is present at residues 139 to 163; that stretch reads PIARRHSLQRFLEKRRDRLVNKNPY. A Nuclear localization signal motif is present at residues 141–148; sequence ARRHSLQR. The disordered stretch occupies residues 152–187; that stretch reads KRRDRLVNKNPYPTSDFKKTDVPTGNVSIKEEFPTA.

Belongs to the TIFY/JAZ family. Interacts with MYC2, AFPH2/NINJA, TIFY10A/JAZ1, TIFY10B/JAZ2, TIFY11A/JAZ5, TIFY11B/JAZ6, TIFY5A/JAZ8 and TIFY9/JAZ10. As to quaternary structure, (Microbial infection) Interacts with the pathogenic Pseudomonas syringae HopZ1a protein. Post-translationally, (Microbial infection) Acetylated by Pseudomonas syringae HopZ1a. In terms of processing, ubiquitinated. Targeted for degradation by the SCF(COI1) E3 ubiquitin ligase-proteasome pathway during jasmonate signaling.

It is found in the nucleus. In terms of biological role, repressor of jasmonate responses. The sequence is that of Protein TIFY 3B from Arabidopsis thaliana (Mouse-ear cress).